Reading from the N-terminus, the 167-residue chain is 2-C-methyl-D-erythritol 2,4-cyclodiphosphate synthase (167 aa).

Residues D8 and H10 each coordinate a divalent metal cation. Residues 8-10 and 34-35 contribute to the 4-CDP-2-C-methyl-D-erythritol 2-phosphate site; these read DIH and HS. Position 42 (H42) interacts with a divalent metal cation. Residues 56-58 and R142 contribute to the 4-CDP-2-C-methyl-D-erythritol 2-phosphate site; that span reads DIG.

It belongs to the IspF family. Homotrimer. The cofactor is a divalent metal cation.

The enzyme catalyses 4-CDP-2-C-methyl-D-erythritol 2-phosphate = 2-C-methyl-D-erythritol 2,4-cyclic diphosphate + CMP. Its pathway is isoprenoid biosynthesis; isopentenyl diphosphate biosynthesis via DXP pathway; isopentenyl diphosphate from 1-deoxy-D-xylulose 5-phosphate: step 4/6. In terms of biological role, involved in the biosynthesis of isopentenyl diphosphate (IPP) and dimethylallyl diphosphate (DMAPP), two major building blocks of isoprenoid compounds. Catalyzes the conversion of 4-diphosphocytidyl-2-C-methyl-D-erythritol 2-phosphate (CDP-ME2P) to 2-C-methyl-D-erythritol 2,4-cyclodiphosphate (ME-CPP) with a corresponding release of cytidine 5-monophosphate (CMP). The polypeptide is 2-C-methyl-D-erythritol 2,4-cyclodiphosphate synthase (Buchnera aphidicola subsp. Schizaphis graminum (strain Sg)).